The sequence spans 320 residues: Carbonic anhydrase 6 (320 aa).

Residues 1–17 (MRALALLLALPLLGARA) form the signal peptide. The 258-residue stretch at 21-278 (SLWTYSEGAL…LNGRVVESNF (258 aa)) folds into the Alpha-carbonic anhydrase domain. Cysteines 42 and 224 form a disulfide. Residue His-85 is the Proton donor/acceptor of the active site. Positions 111, 113, and 138 each coordinate Zn(2+). A substrate-binding site is contributed by 220–221 (TT). Asn-256 carries N-linked (GlcNAc...) asparagine glycosylation.

This sequence belongs to the alpha-carbonic anhydrase family. Requires Zn(2+) as cofactor.

The protein resides in the secreted. It carries out the reaction hydrogencarbonate + H(+) = CO2 + H2O. Its function is as follows. Reversible hydration of carbon dioxide. Its role in saliva is unknown. This chain is Carbonic anhydrase 6 (CA6), found in Canis lupus familiaris (Dog).